We begin with the raw amino-acid sequence, 721 residues long: MTSENHTTIKADSALVMSPTGSTSQAAPFSPSTSKPIQELPDELIQAGWSKCWSKRENRPYYFNRFTNQSLWEMPVLGQHDVISDPLGLNAAPASGEANADAGLGNGQRKRHPSEDASQAGPNSFKRPKVEIPATPTTPTVPISPSTPGVKPWVNTTTDEKQGQASTPAPAPYRPSVVYWDLDIQTNAVIRERAPADHLPPHPEIELQRAQLTTKLRQHYHELCSQREGIEPPRESFNRWLLERKVVDKGLDPLLPSECDPVISPSMFREIMNDIPIRLSRIKYKEEARKLLFKYAEAAKKMIDSRNATPESRKVVKWNVEDTMNWLRRDHSASKEDYMDRLEHLRKQCGPHVASVAKDSVEGICSKIYHISAEYVRRIRQAHLTLLKECNISVDGTESAEVQDRLVYCYPVRLSIPAPPQTRVELHFENDIACLRFKGEMVKVSRGHFNKLELLYRYSCIDDPRFEKFLSRVWCLIKRYQVMFGSGVNEGSGLQGSLPVPVFEALNKQFGVTFECFASPLNCYFKQFCSAFPDIDGFFGSRGPFLSFSPASGSFEANPPFCEELMDAMVTHFEDLLGRSSEPLSFIIFVPEWRDPPTPALTRMEASRFRRHQMTVPAFEHEYRSGSQHICKREEIYYKAIHGTAVIFLQNNAGFAKWEPTTERIQELLAAYKVSGRSLPSPGPSSTNTGEKDSKPAPERTAPSQDNSSPVDKTAQDTTNT.

Composition is skewed to polar residues over residues 1–10 (MTSENHTTIK) and 19–36 (PTGS…TSKP). Residues 1–37 (MTSENHTTIKADSALVMSPTGSTSQAAPFSPSTSKPI) form a disordered region. The 35-residue stretch at 43 to 77 (ELIQAGWSKCWSKRENRPYYFNRFTNQSLWEMPVL) folds into the WW domain. The interval 93–170 (PASGEANADA…KQGQASTPAP (78 aa)) is disordered. Over residues 132-148 (IPATPTTPTVPISPSTP) the composition is skewed to low complexity. Substrate-binding residues include arginine 239 and arginine 269. 558–561 (NPPF) contributes to the S-adenosyl-L-methionine binding site. Substrate is bound by residues glutamate 563 and 593 to 597 (WRDPP). 619-621 (FEH) provides a ligand contact to S-adenosyl-L-methionine. Residues 675-686 (SGRSLPSPGPSS) show a composition bias toward low complexity. The disordered stretch occupies residues 675-721 (SGRSLPSPGPSSTNTGEKDSKPAPERTAPSQDNSSPVDKTAQDTTNT). Residues 702–721 (APSQDNSSPVDKTAQDTTNT) show a composition bias toward polar residues.

This sequence belongs to the CAPAM family.

The protein localises to the nucleus. The catalysed reaction is a 5'-end (N(7)-methyl 5'-triphosphoguanosine)-(2'-O-methyladenosine) in mRNA + S-adenosyl-L-methionine = a 5'-end (N(7)-methyl 5'-triphosphoguanosine)-(N(6),2'-O-dimethyladenosine) in mRNA + S-adenosyl-L-homocysteine + H(+). Its activity is regulated as follows. Cap-specific adenosine methyltransferase activity is inhibited by zinc. Functionally, cap-specific adenosine methyltransferase that catalyzes formation of N(6),2'-O-dimethyladenosine cap (m6A(m)) by methylating the adenosine at the second transcribed position of capped mRNAs. In Danio rerio (Zebrafish), this protein is mRNA (2'-O-methyladenosine-N(6)-)-methyltransferase (pcif1).